The following is an 895-amino-acid chain: DNA double-strand break repair Rad50 ATPase (895 aa).

ATP contacts are provided by residues 32–38 (NGAGKSS) and Gln137. A coiled-coil region spans residues 183–253 (SDYDYLKNEL…LNAQLETIKK (71 aa)). Positions 411–507 (RAEINSSLMQ…ERKHQKKLLD (97 aa)) constitute a Zinc-hook domain. Cys455 and Cys458 together coordinate Zn(2+). Coiled coils occupy residues 464-510 (TEKS…DRIN) and 618-647 (ENSL…AMDE).

This sequence belongs to the SMC family. RAD50 subfamily. As to quaternary structure, homodimer. Forms a heterotetramer composed of two Mre11 subunits and two Rad50 subunits. Requires Zn(2+) as cofactor.

Its function is as follows. Part of the Rad50/Mre11 complex, which is involved in the early steps of DNA double-strand break (DSB) repair. The complex may facilitate opening of the processed DNA ends to aid in the recruitment of HerA and NurA. Rad50 controls the balance between DNA end bridging and DNA resection via ATP-dependent structural rearrangements of the Rad50/Mre11 complex. This Thermoplasma volcanium (strain ATCC 51530 / DSM 4299 / JCM 9571 / NBRC 15438 / GSS1) protein is DNA double-strand break repair Rad50 ATPase.